The chain runs to 144 residues: Prefoldin subunit alpha (144 aa).

Belongs to the prefoldin alpha subunit family. Heterohexamer of two alpha and four beta subunits.

It is found in the cytoplasm. In terms of biological role, molecular chaperone capable of stabilizing a range of proteins. Seems to fulfill an ATP-independent, HSP70-like function in archaeal de novo protein folding. The sequence is that of Prefoldin subunit alpha from Methanococcus maripaludis (strain C5 / ATCC BAA-1333).